A 436-amino-acid polypeptide reads, in one-letter code: MALLYAPQKKQKTTQKIVAEIQDLDYQGLGVAKIQGKTWFIENALPTEKVEAVVTDEKRQYGLATAQKWLQESSQRVEPQCRYYGRCGGCQGQHIPVEMQRKAKEKALFSRLSKLQAEPIQLMPMICGEQWAYRRRVRLSLLWNAKSKTVEMGFRQKNSNQLVSIQQCLVAEQAINDLIPKLTSLLAQYSAPKQLGHIELVSAENGVAMLLRYKGNLAETDRTLLLEFARVNAVNLFLQDDQNIQLVHGEMPYYALDDIRLSFDIRDFIQVNTRLNQQMVETALDWLDLNQDDHVLDLFCGMGNFTLPLAKRVKSAVGIEGVLDMVKKAQANAQFNHIENVEFYQADLDQSFSEQPWSKQHFNKILLDPPRSGAAFALNALCELGAESILYVSCNPATLVRDAEILRSFGYRIIKTAMIDMFPNTSHLESVTLFIK.

The TRAM domain occupies 10 to 68 (KQKTTQKIVAEIQDLDYQGLGVAKIQGKTWFIENALPTEKVEAVVTDEKRQYGLATAQK). Positions 81, 87, 90, and 168 each coordinate [4Fe-4S] cluster. 6 residues coordinate S-adenosyl-L-methionine: Q270, F299, N304, E320, D347, and D368. The active-site Nucleophile is C394.

It belongs to the class I-like SAM-binding methyltransferase superfamily. RNA M5U methyltransferase family. RlmD subfamily.

It carries out the reaction uridine(1939) in 23S rRNA + S-adenosyl-L-methionine = 5-methyluridine(1939) in 23S rRNA + S-adenosyl-L-homocysteine + H(+). Functionally, catalyzes the formation of 5-methyl-uridine at position 1939 (m5U1939) in 23S rRNA. The polypeptide is 23S rRNA (uracil(1939)-C(5))-methyltransferase RlmD (Haemophilus parainfluenzae (strain T3T1)).